The chain runs to 165 residues: Pyruvoyl-dependent arginine decarboxylase 1 (165 aa).

A Pyruvic acid (Ser) modification is found at serine 45.

This sequence belongs to the PdaD family. It depends on pyruvate as a cofactor.

The enzyme catalyses L-arginine + H(+) = agmatine + CO2. This is Pyruvoyl-dependent arginine decarboxylase 1 (pdaD1) from Methanosarcina mazei (strain ATCC BAA-159 / DSM 3647 / Goe1 / Go1 / JCM 11833 / OCM 88) (Methanosarcina frisia).